The sequence spans 171 residues: S-ribosylhomocysteine lyase (171 aa).

Fe cation is bound by residues histidine 54, histidine 58, and cysteine 128.

It belongs to the LuxS family. In terms of assembly, homodimer. Fe cation serves as cofactor.

The catalysed reaction is S-(5-deoxy-D-ribos-5-yl)-L-homocysteine = (S)-4,5-dihydroxypentane-2,3-dione + L-homocysteine. Its function is as follows. Involved in the synthesis of autoinducer 2 (AI-2) which is secreted by bacteria and is used to communicate both the cell density and the metabolic potential of the environment. The regulation of gene expression in response to changes in cell density is called quorum sensing. Catalyzes the transformation of S-ribosylhomocysteine (RHC) to homocysteine (HC) and 4,5-dihydroxy-2,3-pentadione (DPD). The sequence is that of S-ribosylhomocysteine lyase from Photorhabdus laumondii subsp. laumondii (strain DSM 15139 / CIP 105565 / TT01) (Photorhabdus luminescens subsp. laumondii).